A 376-amino-acid chain; its full sequence is UPF0754 membrane protein SSP0953 (376 aa).

2 helical membrane-spanning segments follow: residues 4–24 (FLVI…TNVI) and 356–376 (FLGF…AIFV).

It belongs to the UPF0754 family.

It localises to the cell membrane. The protein is UPF0754 membrane protein SSP0953 of Staphylococcus saprophyticus subsp. saprophyticus (strain ATCC 15305 / DSM 20229 / NCIMB 8711 / NCTC 7292 / S-41).